The sequence spans 230 residues: Germin-like protein 5-1 (230 aa).

Residues 1–20 (MAMVGRSLLLLLLLVTLAAG) form the signal peptide. An intrachain disulfide couples Cys-38 to Cys-53. One can recognise a Cupin type-1 domain in the interval 86 to 219 (YGFTARSVDI…TLLTDEATVD (134 aa)). Mn(2+) is bound by residues His-119, His-121, Glu-126, and His-167. Asn-172 carries an N-linked (GlcNAc...) asparagine glycan.

The protein belongs to the germin family. Oligomer (believed to be a pentamer but probably hexamer).

It localises to the secreted. Its subcellular location is the extracellular space. It is found in the apoplast. Its function is as follows. May play a role in plant defense. Probably has no oxalate oxidase activity even if the active site is conserved. In Oryza sativa subsp. japonica (Rice), this protein is Germin-like protein 5-1.